We begin with the raw amino-acid sequence, 245 residues long: Probable phosphatase ECA2529 (245 aa).

Positions 7, 9, 15, 40, 73, 101, 131, 192, and 194 each coordinate Zn(2+).

Belongs to the PHP family. As to quaternary structure, homotrimer. Zn(2+) serves as cofactor.

The protein is Probable phosphatase ECA2529 of Pectobacterium atrosepticum (strain SCRI 1043 / ATCC BAA-672) (Erwinia carotovora subsp. atroseptica).